Here is a 259-residue protein sequence, read N- to C-terminus: Phosphate import ATP-binding protein PstB (259 aa).

The region spanning Ala-11–Ile-254 is the ABC transporter domain. Residue Gly-43–Ser-50 participates in ATP binding.

The protein belongs to the ABC transporter superfamily. Phosphate importer (TC 3.A.1.7) family. As to quaternary structure, the complex is composed of two ATP-binding proteins (PstB), two transmembrane proteins (PstC and PstA) and a solute-binding protein (PstS).

Its subcellular location is the cell inner membrane. The catalysed reaction is phosphate(out) + ATP + H2O = ADP + 2 phosphate(in) + H(+). Functionally, part of the ABC transporter complex PstSACB involved in phosphate import. Responsible for energy coupling to the transport system. The protein is Phosphate import ATP-binding protein PstB of Geobacter sulfurreducens (strain ATCC 51573 / DSM 12127 / PCA).